A 245-amino-acid polypeptide reads, in one-letter code: 2,3-bisphosphoglycerate-dependent phosphoglycerate mutase (245 aa).

Substrate is bound by residues 8 to 15 (RHGQSLWN), 21 to 22 (TG), Arg-60, 87 to 90 (ERHY), Lys-98, 114 to 115 (RR), and 183 to 184 (GN). His-9 acts as the Tele-phosphohistidine intermediate in catalysis. Glu-87 acts as the Proton donor/acceptor in catalysis.

It belongs to the phosphoglycerate mutase family. BPG-dependent PGAM subfamily.

The enzyme catalyses (2R)-2-phosphoglycerate = (2R)-3-phosphoglycerate. The protein operates within carbohydrate degradation; glycolysis; pyruvate from D-glyceraldehyde 3-phosphate: step 3/5. In terms of biological role, catalyzes the interconversion of 2-phosphoglycerate and 3-phosphoglycerate. This chain is 2,3-bisphosphoglycerate-dependent phosphoglycerate mutase, found in Bacillus cereus (strain G9842).